The sequence spans 203 residues: Translation initiation factor IF-3 (203 aa).

A compositionally biased stretch (basic and acidic residues) spans 172–182 (EAPKNEKKTKE). A disordered region spans residues 172–203 (EAPKNEKKTKENNPPFNRINLMKGENHAKNED).

Belongs to the IF-3 family. Monomer.

The protein resides in the cytoplasm. Its function is as follows. IF-3 binds to the 30S ribosomal subunit and shifts the equilibrium between 70S ribosomes and their 50S and 30S subunits in favor of the free subunits, thus enhancing the availability of 30S subunits on which protein synthesis initiation begins. The polypeptide is Translation initiation factor IF-3 (Helicobacter pylori (strain ATCC 700392 / 26695) (Campylobacter pylori)).